Consider the following 240-residue polypeptide: Tetrahydromethanopterin S-methyltransferase subunit A (240 aa).

The Cytoplasmic segment spans residues 1-218 (MADKKEPAPG…KFHSGVHAGK (218 aa)). H85 contacts 5-hydroxybenzimidazolylcob(I)amide. A helical transmembrane segment spans residues 219-239 (IEGAMIGLTVTISLLGLLLLG). A topological domain (extracellular) is located at residue R240.

This sequence belongs to the MtrA family. The complex is composed of 8 subunits; MtrA, MtrB, MtrC, MtrD, MtrE, MtrF, MtrG and MtrH. 5-hydroxybenzimidazolylcob(I)amide serves as cofactor.

The protein localises to the cell membrane. The enzyme catalyses 5-methyl-5,6,7,8-tetrahydromethanopterin + coenzyme M + 2 Na(+)(in) = 5,6,7,8-tetrahydromethanopterin + methyl-coenzyme M + 2 Na(+)(out). It functions in the pathway one-carbon metabolism; methanogenesis from CO(2); methyl-coenzyme M from 5,10-methylene-5,6,7,8-tetrahydromethanopterin: step 2/2. In terms of biological role, part of a complex that catalyzes the formation of methyl-coenzyme M and tetrahydromethanopterin from coenzyme M and methyl-tetrahydromethanopterin. This is an energy-conserving, sodium-ion translocating step. The polypeptide is Tetrahydromethanopterin S-methyltransferase subunit A (Methanosarcina barkeri (strain Fusaro / DSM 804)).